Reading from the N-terminus, the 124-residue chain is Small ribosomal subunit protein uS12 (124 aa).

The disordered stretch occupies residues 1–23 (MATINQLVRKPRRSKVTKSNSAA). Asp-89 is subject to 3-methylthioaspartic acid.

The protein belongs to the universal ribosomal protein uS12 family. As to quaternary structure, part of the 30S ribosomal subunit. Contacts proteins S8 and S17. May interact with IF1 in the 30S initiation complex.

Its function is as follows. With S4 and S5 plays an important role in translational accuracy. In terms of biological role, interacts with and stabilizes bases of the 16S rRNA that are involved in tRNA selection in the A site and with the mRNA backbone. Located at the interface of the 30S and 50S subunits, it traverses the body of the 30S subunit contacting proteins on the other side and probably holding the rRNA structure together. The combined cluster of proteins S8, S12 and S17 appears to hold together the shoulder and platform of the 30S subunit. The chain is Small ribosomal subunit protein uS12 from Pseudoalteromonas translucida (strain TAC 125).